A 202-amino-acid chain; its full sequence is uncharacterized protein (202 aa).

The region spanning 14 to 74 (NAKTERILDV…AMADRYFQRC (61 aa)) is the HTH tetR-type domain.

This is an uncharacterized protein from Xanthobacter autotrophicus.